Consider the following 183-residue polypeptide: Protein P7 (183 aa).

It localises to the host nucleus. In terms of biological role, may play a role in inhibition of the host immune system by counteracting the type I interferon response. This chain is Protein P7, found in Gadus morhua (Atlantic cod).